A 563-amino-acid polypeptide reads, in one-letter code: Arginine--tRNA ligase (563 aa).

The short motif at 121 to 131 (PNIAKPFSIGH) is the 'HIGH' region element.

This sequence belongs to the class-I aminoacyl-tRNA synthetase family. Monomer.

It localises to the cytoplasm. It catalyses the reaction tRNA(Arg) + L-arginine + ATP = L-arginyl-tRNA(Arg) + AMP + diphosphate. The protein is Arginine--tRNA ligase of Streptococcus pyogenes serotype M49 (strain NZ131).